The sequence spans 493 residues: Rop guanine nucleotide exchange factor 10 (493 aa).

Disordered stretches follow at residues 1-45 (MFDG…RSDM) and 400-423 (GEAE…VVAA). Over residues 17 to 27 (DGMHTPEHELA) the composition is skewed to basic and acidic residues. Residues 35-401 (RRGKQNRRSD…RLVQRQLMGE (367 aa)) enclose the PRONE domain.

In terms of biological role, guanine-nucleotide exchange factor (GEF) that acts as an activator of Rop (Rho of plants) GTPases by promoting the exchange of GDP for GTP. This is Rop guanine nucleotide exchange factor 10 (ROPGEF10) from Arabidopsis thaliana (Mouse-ear cress).